The following is a 981-amino-acid chain: RNA polymerase II assembly factor RTP1 (981 aa).

9 HEAT repeats span residues 64–101 (SNNN…LLPI), 161–199 (DTLS…ILLG), 226–261 (YTLF…RRPE), 366–403 (KELN…TTPG), 609–646 (KDVL…GEET), 655–692 (SSYK…KLQS), 765–799 (ISLE…LCEL), 800–836 (EPET…NYIQ), and 945–980 (EYNY…VLDS). Residues 630–651 (QEVEADSDDEVEEGEETEELDP) are compositionally biased toward acidic residues. The segment at 630–652 (QEVEADSDDEVEEGEETEELDPN) is disordered.

Belongs to the Tango6 family. As to quaternary structure, interacts with RNA polymerase II subunits RPB2 and RPB3. Interacts with the R2TP complex. Interacts with the nuclear pore complex subunits NUP100 and NUP116.

It is found in the cytoplasm. Required for the cytoplasmic assembly and the nuclear import of RNA polymerase II. May facilitate the starting interaction between RNA polymerase II subunits RPB2 and RPB3 and the subsequent interaction of the resulting complex with subunit RPB1. May also participate in the transport of RNA polymerase II through the nuclear pore complex. In Saccharomyces cerevisiae (strain ATCC 204508 / S288c) (Baker's yeast), this protein is RNA polymerase II assembly factor RTP1.